We begin with the raw amino-acid sequence, 137 residues long: Large ribosomal subunit protein uL16 (137 aa).

Belongs to the universal ribosomal protein uL16 family. In terms of assembly, part of the 50S ribosomal subunit.

Binds 23S rRNA and is also seen to make contacts with the A and possibly P site tRNAs. This Methylocella silvestris (strain DSM 15510 / CIP 108128 / LMG 27833 / NCIMB 13906 / BL2) protein is Large ribosomal subunit protein uL16.